The sequence spans 29 residues: Potassium channel toxin alpha-KTx 3.15 (29 aa).

Cysteines 8 and 27 form a disulfide.

It belongs to the short scorpion toxin superfamily. Potassium channel inhibitor family. Alpha-KTx 03 subfamily. Expressed by the venom gland.

Its subcellular location is the secreted. Its function is as follows. May play a role in blocking voltage-gated potassium channels Kv1.1/KCNA1, Kv1.3/KCNA3 and Kv1.6/KCNA6. The chain is Potassium channel toxin alpha-KTx 3.15 from Mesobuthus gibbosus (Mediterranean checkered scorpion).